The primary structure comprises 671 residues: DNA ligase (671 aa).

NAD(+)-binding positions include 32–36, 81–82, and glutamate 113; these read DAEYD and SL. Lysine 115 (N6-AMP-lysine intermediate) is an active-site residue. 4 residues coordinate NAD(+): arginine 136, glutamate 173, lysine 290, and lysine 314. Zn(2+) is bound by residues cysteine 408, cysteine 411, cysteine 426, and cysteine 432. The region spanning 593–671 is the BRCT domain; it reads EIDSPFAGKT…EAEMLRLLGS (79 aa).

This sequence belongs to the NAD-dependent DNA ligase family. LigA subfamily. Mg(2+) is required as a cofactor. Mn(2+) serves as cofactor.

It carries out the reaction NAD(+) + (deoxyribonucleotide)n-3'-hydroxyl + 5'-phospho-(deoxyribonucleotide)m = (deoxyribonucleotide)n+m + AMP + beta-nicotinamide D-nucleotide.. DNA ligase that catalyzes the formation of phosphodiester linkages between 5'-phosphoryl and 3'-hydroxyl groups in double-stranded DNA using NAD as a coenzyme and as the energy source for the reaction. It is essential for DNA replication and repair of damaged DNA. This Escherichia coli O9:H4 (strain HS) protein is DNA ligase.